We begin with the raw amino-acid sequence, 404 residues long: Imidazolonepropionase (404 aa).

Fe(3+) contacts are provided by H73 and H75. Positions 73 and 75 each coordinate Zn(2+). Residues R82, Y145, and H178 each coordinate 4-imidazolone-5-propanoate. Residue Y145 participates in N-formimidoyl-L-glutamate binding. H243 contacts Fe(3+). H243 serves as a coordination point for Zn(2+). Q246 lines the 4-imidazolone-5-propanoate pocket. A Fe(3+)-binding site is contributed by D318. Residue D318 coordinates Zn(2+). N-formimidoyl-L-glutamate is bound by residues N320 and G322. Residue S323 coordinates 4-imidazolone-5-propanoate.

Belongs to the metallo-dependent hydrolases superfamily. HutI family. Zn(2+) serves as cofactor. The cofactor is Fe(3+).

The protein resides in the cytoplasm. The enzyme catalyses 4-imidazolone-5-propanoate + H2O = N-formimidoyl-L-glutamate. It participates in amino-acid degradation; L-histidine degradation into L-glutamate; N-formimidoyl-L-glutamate from L-histidine: step 3/3. Its function is as follows. Catalyzes the hydrolytic cleavage of the carbon-nitrogen bond in imidazolone-5-propanoate to yield N-formimidoyl-L-glutamate. It is the third step in the universal histidine degradation pathway. The sequence is that of Imidazolonepropionase from Bradyrhizobium diazoefficiens (strain JCM 10833 / BCRC 13528 / IAM 13628 / NBRC 14792 / USDA 110).